The sequence spans 206 residues: 2,3-bisphosphoglycerate-dependent phosphoglycerate mutase (206 aa).

Residues 9 to 16, 22 to 23, R61, 88 to 91, K99, 115 to 116, and 159 to 160 each bind substrate; these read RHGQSEWN, TG, ERDY, RR, and GN. Residue H10 is the Tele-phosphohistidine intermediate of the active site. The active-site Proton donor/acceptor is the E88.

This sequence belongs to the phosphoglycerate mutase family. BPG-dependent PGAM subfamily. Homodimer.

The catalysed reaction is (2R)-2-phosphoglycerate = (2R)-3-phosphoglycerate. It functions in the pathway carbohydrate degradation; glycolysis; pyruvate from D-glyceraldehyde 3-phosphate: step 3/5. Catalyzes the interconversion of 2-phosphoglycerate and 3-phosphoglycerate. The chain is 2,3-bisphosphoglycerate-dependent phosphoglycerate mutase from Methylocella silvestris (strain DSM 15510 / CIP 108128 / LMG 27833 / NCIMB 13906 / BL2).